Consider the following 377-residue polypeptide: Geranylgeranyl transferase type-1 subunit beta (377 aa).

4 PFTB repeats span residues 144–186, 193–234, 245–284, and 291–333; these read KEAC…YMLN, MKKA…CLMG, LNRI…KLLK, and FEKN…SLME. Residues 219 to 221 and 263 to 266 contribute to the geranylgeranyl diphosphate site; these read HGG and RPNK. Zn(2+) is bound by residues D269 and C271. 272–275 contributes to the geranylgeranyl diphosphate binding site; that stretch reads YSFW. Residue H321 coordinates Zn(2+).

Belongs to the protein prenyltransferase subunit beta family. Heterodimer of FNTA and PGGT1B. PGGT1B mediates interaction with substrate peptides. Zn(2+) is required as a cofactor. It depends on Mg(2+) as a cofactor.

It carries out the reaction geranylgeranyl diphosphate + L-cysteinyl-[protein] = S-geranylgeranyl-L-cysteinyl-[protein] + diphosphate. Catalyzes the transfer of a geranylgeranyl moiety from geranylgeranyl diphosphate to a cysteine at the fourth position from the C-terminus of proteins with the C-terminal sequence Cys-aliphatic-aliphatic-X. Known substrates include RAC1, RAC2, RAP1A and RAP1B. This chain is Geranylgeranyl transferase type-1 subunit beta (Pggt1b), found in Rattus norvegicus (Rat).